Here is a 228-residue protein sequence, read N- to C-terminus: Cytochrome c oxidase subunit 2 (228 aa).

Residues 1–14 lie on the Mitochondrial intermembrane side of the membrane; it reads MANHSQLGFQDASS. A helical membrane pass occupies residues 15–45; sequence PIMEELVEFHDHALIVALAICSLVLYLLAHM. At 46 to 58 the chain is on the mitochondrial matrix side; the sequence is LMEKLSSNAVDAQ. A helical membrane pass occupies residues 59-86; the sequence is EVELIWTILPAIVLVLLALPSLQILYMM. The Mitochondrial intermembrane portion of the chain corresponds to 87–228; that stretch reads DEIDEPDLTL…ETWSSLLSAS (142 aa). Residues H160, C195, E197, C199, H203, and M206 each contribute to the Cu cation site. E197 lines the Mg(2+) pocket.

It belongs to the cytochrome c oxidase subunit 2 family. Component of the cytochrome c oxidase (complex IV, CIV), a multisubunit enzyme composed of 14 subunits. The complex is composed of a catalytic core of 3 subunits MT-CO1, MT-CO2 and MT-CO3, encoded in the mitochondrial DNA, and 11 supernumerary subunits COX4I, COX5A, COX5B, COX6A, COX6B, COX6C, COX7A, COX7B, COX7C, COX8 and NDUFA4, which are encoded in the nuclear genome. The complex exists as a monomer or a dimer and forms supercomplexes (SCs) in the inner mitochondrial membrane with NADH-ubiquinone oxidoreductase (complex I, CI) and ubiquinol-cytochrome c oxidoreductase (cytochrome b-c1 complex, complex III, CIII), resulting in different assemblies (supercomplex SCI(1)III(2)IV(1) and megacomplex MCI(2)III(2)IV(2)). Found in a complex with TMEM177, COA6, COX18, COX20, SCO1 and SCO2. Interacts with TMEM177 in a COX20-dependent manner. Interacts with COX20. Interacts with COX16. Requires Cu cation as cofactor.

It localises to the mitochondrion inner membrane. It catalyses the reaction 4 Fe(II)-[cytochrome c] + O2 + 8 H(+)(in) = 4 Fe(III)-[cytochrome c] + 2 H2O + 4 H(+)(out). In terms of biological role, component of the cytochrome c oxidase, the last enzyme in the mitochondrial electron transport chain which drives oxidative phosphorylation. The respiratory chain contains 3 multisubunit complexes succinate dehydrogenase (complex II, CII), ubiquinol-cytochrome c oxidoreductase (cytochrome b-c1 complex, complex III, CIII) and cytochrome c oxidase (complex IV, CIV), that cooperate to transfer electrons derived from NADH and succinate to molecular oxygen, creating an electrochemical gradient over the inner membrane that drives transmembrane transport and the ATP synthase. Cytochrome c oxidase is the component of the respiratory chain that catalyzes the reduction of oxygen to water. Electrons originating from reduced cytochrome c in the intermembrane space (IMS) are transferred via the dinuclear copper A center (CU(A)) of subunit 2 and heme A of subunit 1 to the active site in subunit 1, a binuclear center (BNC) formed by heme A3 and copper B (CU(B)). The BNC reduces molecular oxygen to 2 water molecules using 4 electrons from cytochrome c in the IMS and 4 protons from the mitochondrial matrix. This is Cytochrome c oxidase subunit 2 (MT-CO2) from Cairina moschata (Muscovy duck).